Here is a 240-residue protein sequence, read N- to C-terminus: 5-oxoprolinase subunit B (240 aa).

G194–T201 is a binding site for ATP.

This sequence belongs to the PxpB family. Forms a complex composed of PxpA, PxpB and PxpC. Interacts with PxpC (KipA). Interaction with PxpC prevents the inhibitory action of PxpB (KipI). Interacts with KinA. Two PxpB monomers bind via their C-domains at a conserved proline in the KinA dimerization and histidine-phosphotransfer (DHp) domain.

It carries out the reaction 5-oxo-L-proline + ATP + 2 H2O = L-glutamate + ADP + phosphate + H(+). Its function is as follows. Catalyzes the cleavage of 5-oxoproline to form L-glutamate coupled to the hydrolysis of ATP to ADP and inorganic phosphate. In addition, is a potent inhibitor of the autophosphorylation reaction of kinase A (kinA) and its reverse reaction, but does not inhibit phosphate transfer to the Spo0F response regulator once kinase A is phosphorylated. Is an inhibitor of the catalytic domain of kinase A affecting the ATP/ADP reactions and not the phosphotransferase functions of this domain. The inhibition is non-competitive with respect to ATP. The polypeptide is 5-oxoprolinase subunit B (Bacillus subtilis (strain 168)).